The chain runs to 657 residues: Single-minded homolog 2 (657 aa).

The 53-residue stretch at 1-53 (MKEKSKNAAKTRREKENGEFYELAKLLPLPSAITSQLDKASIIRLTTSYLKMR) folds into the bHLH domain. PAS domains follow at residues 77-147 (AKEL…PPLH) and 218-288 (PPSA…LVKG). Residues 218–288 (PPSAITEIKL…YAHHLLLVKG (71 aa)) form the PAC domain. The Single-minded C-terminal domain maps to 336 to 657 (EYKELQLSLD…GASVIITNGR (322 aa)). A compositionally biased stretch (polar residues) spans 354–364 (ESWRTTLSTSQ). Disordered regions lie at residues 354–387 (ESWR…NPYP) and 612–641 (LGSA…APGA). A Nuclear localization signal motif is present at residues 367-386 (RKSAKPKNTKMKTKLRTNPY). Residues 369–381 (SAKPKNTKMKTKL) are compositionally biased toward basic residues.

In terms of assembly, efficient DNA binding requires dimerization with another bHLH protein. Heterodimer of SIM2 and ARNT. As to expression, transcripts were detected in high levels in kidney followed by skeletal muscle and lung. Low levels were found in testis, brain and heart. In early fetal development it is found in CNS, developing kidney, tongue epithelium and cartilage primordia.

It localises to the nucleus. Functionally, transcription factor that may be a master gene of CNS development in cooperation with Arnt. It may have pleiotropic effects in the tissues expressed during development. The polypeptide is Single-minded homolog 2 (Sim2) (Mus musculus (Mouse)).